The primary structure comprises 323 residues: Dehydrogenase/reductase SDR family member 7B (323 aa).

Residues 1-4 are Cytoplasmic-facing; the sequence is MDLT. A helical; Signal-anchor for type II membrane protein membrane pass occupies residues 5 to 25; the sequence is SWAIFPLLLASIGVYGLYKLL. The Lumenal portion of the chain corresponds to 26–272; the sequence is QKLRSGAYLQ…AVGERRKELL (247 aa). NAD(+) is bound by residues S46 and L48. S178 serves as a coordination point for substrate. 3 residues coordinate NAD(+): Y191, K195, and T226. Y191 acts as the Proton acceptor in catalysis.

This sequence belongs to the short-chain dehydrogenases/reductases (SDR) family.

Its subcellular location is the endoplasmic reticulum membrane. Functionally, putative oxidoreductase. The sequence is that of Dehydrogenase/reductase SDR family member 7B (dhrs7b) from Xenopus laevis (African clawed frog).